Consider the following 113-residue polypeptide: uncharacterized protein (113 aa).

The first 22 residues, 1 to 22 (MCRFPTFLLIAIAITMLPTILS), serve as a signal peptide directing secretion. N-linked (GlcNAc...) asparagine glycosylation is present at asparagine 47.

It localises to the secreted. This is an uncharacterized protein from Caenorhabditis elegans.